Here is a 466-residue protein sequence, read N- to C-terminus: Vacuolar protein sorting-associated protein 30 (466 aa).

The disordered stretch occupies residues 35–55; the sequence is SETNTDNSDNNKHNGENDRNI. The segment covering 43–53 has biased composition (basic and acidic residues); that stretch reads DNNKHNGENDR. Residues 149–258 adopt a coiled-coil conformation; it reads DTLLEKLKEE…QMEHLSFIKD (110 aa). Residues 279-463 form a BARA region; it reads LNIYNETFRI…LAFSTSRINK (185 aa). Positions 439–464 are required for membrane-association, autophagic function during starvation and normal autophagosome morphology; that stretch reads WTTACKFLLTNIKWLLAFSTSRINKA.

This sequence belongs to the beclin family. As to quaternary structure, component of the autophagy-specific VPS34 PI3-kinase complex I; and of the VPS34 PI3-kinase complex II.

The protein localises to the endosome membrane. Its subcellular location is the vacuole membrane. It is found in the preautophagosomal structure membrane. Functionally, required for cytoplasm to vacuole transport (Cvt), autophagy, nucleophagy, and mitophagy, as a part of the autophagy-specific VPS34 PI3-kinase complex I. This complex is essential to recruit the ATG8-phosphatidylinositol conjugate and the ATG12-ATG5 conjugate to the pre-autophagosomal structure. Also involved in endosome-to-Golgi retrograde transport as part of the VPS34 PI3-kinase complex II. This Kluyveromyces marxianus (strain DMKU3-1042 / BCC 29191 / NBRC 104275) (Yeast) protein is Vacuolar protein sorting-associated protein 30.